A 334-amino-acid polypeptide reads, in one-letter code: N-acetyl-gamma-glutamyl-phosphate reductase (334 aa).

Residue Cys-154 is part of the active site.

This sequence belongs to the NAGSA dehydrogenase family. Type 1 subfamily.

It localises to the cytoplasm. It catalyses the reaction N-acetyl-L-glutamate 5-semialdehyde + phosphate + NADP(+) = N-acetyl-L-glutamyl 5-phosphate + NADPH + H(+). It participates in amino-acid biosynthesis; L-arginine biosynthesis; N(2)-acetyl-L-ornithine from L-glutamate: step 3/4. Its function is as follows. Catalyzes the NADPH-dependent reduction of N-acetyl-5-glutamyl phosphate to yield N-acetyl-L-glutamate 5-semialdehyde. The chain is N-acetyl-gamma-glutamyl-phosphate reductase from Vibrio parahaemolyticus serotype O3:K6 (strain RIMD 2210633).